Reading from the N-terminus, the 2704-residue chain is G surface protein, allelic form 168 (2704 aa).

A signal peptide spans 1-20 (MNNKFIIFSLLLALVASQTY). PSA repeat units lie at residues 112-165 (TLDS…NTCD), 172-231 (ATDK…RICD), 238-297 (TTDD…KTCA), 304-360 (TTNS…KTCA), 400-460 (TTND…DKTC), 468-523 (TTHD…KKQC), 530-590 (TTTH…KACS), 596-667 (FTTT…KSCA), 683-742 (FTFS…KTCA), 747-806 (TSHA…ATCA), 815-881 (DSDT…YALS), 929-994 (LTFA…AAEC), 1003-1061 (LDHS…FANC), 1069-1123 (LTNT…ACLT), 1141-1196 (LTNA…ACLT), 1214-1269 (LTNA…ACLT), 1287-1342 (LTDA…ACLT), 1360-1415 (LTNA…ACLT), 1433-1495 (LTDA…DVTC), 1503-1566 (LDHA…ATDC), 1576-1641 (ITYE…ATTC), 1684-1740 (NHTN…KTCD), 1750-1807 (DDTE…DLNC), 1817-1887 (DTHN…KSCT), 1893-1965 (TTTH…KSCA), 1974-2033 (DDDT…KSCD), 2070-2137 (ATDA…IKNC), 2145-2204 (TSEA…KDCQ), 2209-2274 (TTHA…YTSC), 2348-2419 (YTTH…QSCA), and 2424-2489 (TTHA…LTCA).

Its subcellular location is the cell membrane. Its function is as follows. This protein is the surface antigen or immobilization antigen of Paramecium primaurelia. This chain is G surface protein, allelic form 168 (168G), found in Paramecium primaurelia.